A 748-amino-acid polypeptide reads, in one-letter code: CCR4-NOT transcription complex subunit 10-B (748 aa).

A compositionally biased stretch (basic and acidic residues) spans 1–16 (MAADKAGEQGAEKHEG). 3 disordered regions span residues 1–25 (MAAD…GISD), 483–524 (KQEN…PPSS), and 605–634 (VSLG…KQIP). Composition is skewed to polar residues over residues 487–509 (GSKA…VCSN) and 605–615 (VSLGVSSNEQE).

Belongs to the CNOT10 family. Component of the CCR4-NOT complex. cnot10 and cnot11 form a subcomplex docked to the cnot1 scaffold.

The protein resides in the cytoplasm. Its subcellular location is the nucleus. In terms of biological role, component of the CCR4-NOT complex which is one of the major cellular mRNA deadenylases and is linked to various cellular processes including bulk mRNA degradation, miRNA-mediated repression, translational repression during translational initiation and general transcription regulation. Additional complex functions may be a consequence of its influence on mRNA expression. Is not required for association of CNOT7 to the CCR4-NOT complex. The protein is CCR4-NOT transcription complex subunit 10-B (cnot10-b) of Xenopus laevis (African clawed frog).